Consider the following 173-residue polypeptide: Crossover junction endodeoxyribonuclease RuvC (173 aa).

Active-site residues include D8, E67, and D139. Residues D8, E67, and D139 each coordinate Mg(2+).

This sequence belongs to the RuvC family. In terms of assembly, homodimer which binds Holliday junction (HJ) DNA. The HJ becomes 2-fold symmetrical on binding to RuvC with unstacked arms; it has a different conformation from HJ DNA in complex with RuvA. In the full resolvosome a probable DNA-RuvA(4)-RuvB(12)-RuvC(2) complex forms which resolves the HJ. Mg(2+) is required as a cofactor.

It is found in the cytoplasm. It carries out the reaction Endonucleolytic cleavage at a junction such as a reciprocal single-stranded crossover between two homologous DNA duplexes (Holliday junction).. The RuvA-RuvB-RuvC complex processes Holliday junction (HJ) DNA during genetic recombination and DNA repair. Endonuclease that resolves HJ intermediates. Cleaves cruciform DNA by making single-stranded nicks across the HJ at symmetrical positions within the homologous arms, yielding a 5'-phosphate and a 3'-hydroxyl group; requires a central core of homology in the junction. The consensus cleavage sequence is 5'-(A/T)TT(C/G)-3'. Cleavage occurs on the 3'-side of the TT dinucleotide at the point of strand exchange. HJ branch migration catalyzed by RuvA-RuvB allows RuvC to scan DNA until it finds its consensus sequence, where it cleaves and resolves the cruciform DNA. This Citrobacter koseri (strain ATCC BAA-895 / CDC 4225-83 / SGSC4696) protein is Crossover junction endodeoxyribonuclease RuvC.